The sequence spans 171 residues: Tetratricopeptide repeat protein 9C (171 aa).

3 TPR repeats span residues 8–41, 72–107, and 108–141; these read AQLYKEEGNQRYREGKYRDAVSRYHRALLQLRGL, TDCYNNLAACLLQMEPVKYERVREYSQKVLERQPEN, and AKALYRAGVAFFHLQDYDQARHYLLAAVNRQPKD.

This sequence belongs to the TTC9 family.

This is Tetratricopeptide repeat protein 9C (Ttc9c) from Rattus norvegicus (Rat).